Consider the following 485-residue polypeptide: Probable serine/threonine-protein kinase nek1 (485 aa).

The Protein kinase domain maps to 12-283; that stretch reads YLIKSQIGSG…TQQILEQVFI (272 aa). ATP is bound by residues 18-26 and Lys-41; that span reads IGSGSYGNT. Residue Asp-136 is the Proton acceptor of the active site. Residues 354-365 are compositionally biased toward polar residues; the sequence is KNQQQQSPQKLE. Positions 354–419 are disordered; sequence KNQQQQSPQK…NNDKNNNINN (66 aa). The segment covering 366 to 419 has biased composition (low complexity); sequence NNNNNNNDNNNNNNNNNNNNNNNNNNNNNNNNNNNNNNNNNNNNNNDKNNNINN.

This sequence belongs to the protein kinase superfamily. NEK Ser/Thr protein kinase family. NIMA subfamily.

The enzyme catalyses L-seryl-[protein] + ATP = O-phospho-L-seryl-[protein] + ADP + H(+). It catalyses the reaction L-threonyl-[protein] + ATP = O-phospho-L-threonyl-[protein] + ADP + H(+). The protein is Probable serine/threonine-protein kinase nek1 (nek1) of Dictyostelium discoideum (Social amoeba).